We begin with the raw amino-acid sequence, 514 residues long: ATP synthase subunit alpha (514 aa).

170–177 (GDRQIGKT) lines the ATP pocket.

This sequence belongs to the ATPase alpha/beta chains family. As to quaternary structure, F-type ATPases have 2 components, CF(1) - the catalytic core - and CF(0) - the membrane proton channel. CF(1) has five subunits: alpha(3), beta(3), gamma(1), delta(1), epsilon(1). CF(0) has three main subunits: a(1), b(2) and c(9-12). The alpha and beta chains form an alternating ring which encloses part of the gamma chain. CF(1) is attached to CF(0) by a central stalk formed by the gamma and epsilon chains, while a peripheral stalk is formed by the delta and b chains.

It is found in the cell inner membrane. The enzyme catalyses ATP + H2O + 4 H(+)(in) = ADP + phosphate + 5 H(+)(out). Its function is as follows. Produces ATP from ADP in the presence of a proton gradient across the membrane. The alpha chain is a regulatory subunit. The sequence is that of ATP synthase subunit alpha from Pseudomonas savastanoi pv. phaseolicola (strain 1448A / Race 6) (Pseudomonas syringae pv. phaseolicola (strain 1448A / Race 6)).